Here is a 135-residue protein sequence, read N- to C-terminus: MRDMQDDDTKSPAPPPAAAAAARRAAGQAAPDASALRDRFAKLAQADTPEAATDAAAAADDEVTRIRALIDEMRPTFRRDGGDIELVRVEGAKVIVHLSGACAGCMLAGQTLYGVQKRITDVLGRPFRVIPDIRH.

Positions 1-10 are enriched in basic and acidic residues; it reads MRDMQDDDTK. A disordered region spans residues 1-29; it reads MRDMQDDDTKSPAPPPAAAAAARRAAGQA. Residues 18–29 are compositionally biased toward low complexity; the sequence is AAAAARRAAGQA.

Belongs to the NifU family.

Functionally, may be involved in the formation or repair of [Fe-S] clusters present in iron-sulfur proteins. This is Nitrogen fixation protein NifU 1 (nifU1) from Rhodobacter capsulatus (Rhodopseudomonas capsulata).